The following is an 80-amino-acid chain: Conotoxin VnMSGL-0121 (80 aa).

Positions 1 to 20 are cleaved as a signal peptide; sequence MSGLGIMVLTLLLLVSMATS. A propeptide spanning residues 21–44 is cleaved from the precursor; that stretch reads HQDGGGKQATQRDAINVRRRRSIT. Cystine bridges form between Cys-52–Cys-65, Cys-56–Cys-74, and Cys-64–Cys-78. At Phe-79 the chain carries Phenylalanine amide.

It belongs to the conotoxin O3 superfamily. In terms of tissue distribution, expressed by the venom duct.

The protein localises to the secreted. This chain is Conotoxin VnMSGL-0121, found in Conus ventricosus (Mediterranean cone).